The sequence spans 419 residues: N-acylglucosamine 2-epimerase (419 aa).

The interval 185-206 is leucine-zipper; it reads LLNLVEQLGEEDEEMTDKYAEL. Phosphoserine is present on serine 418.

It belongs to the N-acylglucosamine 2-epimerase family. Homodimer. Forms a heterodimer with renin and inhibits its activity. As to expression, kidney, adrenal gland, brain, lung, spleen, ovary, testis and heart.

It carries out the reaction an N-acyl-D-glucosamine = an N-acyl-D-mannosamine. It participates in amino-sugar metabolism; N-acetylneuraminate degradation. In terms of biological role, catalyzes the interconversion of N-acetylglucosamine to N-acetylmannosamine. Involved in the N-glycolylneuraminic acid (Neu5Gc) degradation pathway. This chain is N-acylglucosamine 2-epimerase (Renbp), found in Rattus norvegicus (Rat).